A 257-amino-acid polypeptide reads, in one-letter code: UPF0246 protein BT_3869 (257 aa).

The protein belongs to the UPF0246 family.

This is UPF0246 protein BT_3869 from Bacteroides thetaiotaomicron (strain ATCC 29148 / DSM 2079 / JCM 5827 / CCUG 10774 / NCTC 10582 / VPI-5482 / E50).